The following is a 465-amino-acid chain: WAS protein family homolog 2 (465 aa).

A required for WASH complex assembly region spans residues 1–54 (MTPVRMQHSLAGQTYAVPLIQPDLRREEAVQQMADALQYLQKVSGDIFSRISQQ). The interval 1–167 (MTPVRMQHSL…EGLGGLPSNI (167 aa)) is WHD1. Lysine 220 participates in a covalent cross-link: Glycyl lysine isopeptide (Lys-Gly) (interchain with G-Cter in ubiquitin). Disordered stretches follow at residues 297–407 (QDGV…QGGH) and 422–465 (GISG…DWES). The segment covering 302–314 (TPPPPPPPPPPAP) has biased composition (pro residues). A VCA region spans residues 349-465 (QGAPREVVDP…AEEDEDDWES (117 aa)). The WH2 domain occupies 361–383 (GRATLLESIRQAGGIGKAKLRSM). A compositionally biased stretch (basic and acidic residues) spans 382-398 (SMKERKLEKKKQKEQEQ). Residues 424–436 (SGKGPGAGEGPGG) show a composition bias toward gly residues. Positions 456-465 (AEEDEDDWES) are enriched in acidic residues.

This sequence belongs to the WASH1 family. Component of the WASH core complex also described as WASH regulatory complex (SHRC) composed of WASH (WASHC1, WASH2P or WASH3P), WASHC2 (WASHC2A or WASHC2C), WASHC3, WASHC4 and WASHC5. The WASH core complex associates with the F-actin-capping protein dimer (formed by CAPZA1, CAPZA2 or CAPZA3 and CAPZB) in a transient or substoichiometric manner which was initially described as WASH complex. Interacts (via WHD1 region) with WASHC2C; the interaction is direct. Interacts with alpha-tubulin. Interacts with BECN1; WASHC1 and AMBRA1 can competitively interact with BECN1. Interacts with BLOC1S2; may associate with the BLOC-1 complex. Interacts with tubulin gamma chain (TUBG1 or TUBG2). Interacts with EXOC1, EXOC4, EXOC8; in MMP14-positive endosomes in breast tumor cells; indicative for an association with the exocyst complex.

The protein localises to the early endosome membrane. The protein resides in the recycling endosome membrane. Its subcellular location is the late endosome. It localises to the cytoplasmic vesicle. It is found in the autophagosome. The protein localises to the cytoplasm. The protein resides in the cytoskeleton. Its subcellular location is the microtubule organizing center. It localises to the centrosome. It is found in the centriole. Its function is as follows. Acts as a nucleation-promoting factor at the surface of endosomes, where it recruits and activates the Arp2/3 complex to induce actin polymerization, playing a key role in the fission of tubules that serve as transport intermediates during endosome sorting. Involved in endocytic trafficking of EGF. Involved in transferrin receptor recycling. Regulates the trafficking of endosomal alpha5beta1 integrin to the plasma membrane and involved in invasive cell migration. In T-cells involved in endosome-to-membrane recycling of receptors including T-cell receptor (TCR), CD28 and ITGAL; proposed to be implicated in T-cell proliferation and effector function. In dendritic cells involved in endosome-to-membrane recycling of major histocompatibility complex (MHC) class II probably involving retromer and subsequently allowing antigen sampling, loading and presentation during T-cell activation. Involved in Arp2/3 complex-dependent actin assembly driving Salmonella typhimurium invasion independent of ruffling. Involved in the exocytosis of MMP14 leading to matrix remodeling during invasive migration and implicating late endosome-to-plasma membrane tubular connections and cooperation with the exocyst complex. Involved in negative regulation of autophagy independently from its role in endosomal sorting by inhibiting BECN1 ubiquitination to inactivate PIK3C3/Vps34 activity. This is WAS protein family homolog 2 (WASH2P) from Homo sapiens (Human).